A 321-amino-acid chain; its full sequence is GTP 3',8-cyclase (321 aa).

In terms of domain architecture, Radical SAM core spans 5–227 (SYDRVVDYLR…DEGYDGASPS (223 aa)). GTP is bound at residue Arg14. [4Fe-4S] cluster contacts are provided by Cys21 and Cys25. Residue Tyr27 participates in S-adenosyl-L-methionine binding. Cys28 is a [4Fe-4S] cluster binding site. Arg64 is a GTP binding site. An S-adenosyl-L-methionine-binding site is contributed by Gly68. Residue Thr95 participates in GTP binding. Ser119 contributes to the S-adenosyl-L-methionine binding site. Residue Lys155 coordinates GTP. S-adenosyl-L-methionine is bound at residue Met189. Positions 249 and 252 each coordinate [4Fe-4S] cluster. Residue 254 to 256 (RIR) participates in GTP binding. Residue Cys266 participates in [4Fe-4S] cluster binding.

It belongs to the radical SAM superfamily. MoaA family. As to quaternary structure, monomer and homodimer. It depends on [4Fe-4S] cluster as a cofactor.

It catalyses the reaction GTP + AH2 + S-adenosyl-L-methionine = (8S)-3',8-cyclo-7,8-dihydroguanosine 5'-triphosphate + 5'-deoxyadenosine + L-methionine + A + H(+). Its pathway is cofactor biosynthesis; molybdopterin biosynthesis. Functionally, catalyzes the cyclization of GTP to (8S)-3',8-cyclo-7,8-dihydroguanosine 5'-triphosphate. This Sulfurimonas denitrificans (strain ATCC 33889 / DSM 1251) (Thiomicrospira denitrificans (strain ATCC 33889 / DSM 1251)) protein is GTP 3',8-cyclase.